Reading from the N-terminus, the 182-residue chain is ADP-ribosylation factor-like protein 3 (182 aa).

G2 carries N-myristoyl glycine lipidation. S5 is subject to Phosphoserine. Residues G24–T31, T48, D67–Q71, G70, N126–D129, and S159–L161 contribute to the GTP site. Mg(2+) is bound by residues T31 and T48.

This sequence belongs to the small GTPase superfamily. Arf family. As to quaternary structure, found in a complex with ARL3, RP2 and UNC119 (or UNC119B); RP2 induces hydrolysis of GTP ARL3 in the complex, leading to the release of UNC119 (or UNC119B). Interacts with RP2; interaction is direct and stimulated with the activated GTP-bound form of ARL3. Interacts with SYS1. Interacts with ARL2BP; the GTP-bound form interacts with ARL2BP. Microtubule-associated protein. Does not interact with TBCC. Interacts with RP2. Interacts with PDE6D; the interaction occurs specifically with the GTP-bound form of ARL3. Interacts with GGA1; the interaction recruits PKD1:PKD2 complex to trans-Golgi network and is required for ciliary targeting of PKD1:PKD2 complex. Interacts with DNAAF9.

The protein localises to the golgi apparatus membrane. It is found in the cytoplasm. It localises to the cytoskeleton. Its subcellular location is the spindle. The protein resides in the nucleus. The protein localises to the microtubule organizing center. It is found in the centrosome. It localises to the cell projection. Its subcellular location is the cilium. Functionally, small GTP-binding protein which cycles between an inactive GDP-bound and an active GTP-bound form, and the rate of cycling is regulated by guanine nucleotide exchange factors (GEF) and GTPase-activating proteins (GAP). Required for normal cytokinesis and cilia signaling. Requires assistance from GTPase-activating proteins (GAPs) like RP2 and PDE6D, in order to cycle between inactive GDP-bound and active GTP-bound forms. Required for targeting proteins to the cilium, including myristoylated NPHP3 and prenylated INPP5E. Targets NPHP3 to the ciliary membrane by releasing myristoylated NPHP3 from UNC119B cargo adapter into the cilium. Required for PKD1:PKD2 complex targeting from the trans-Golgi network to the cilium. The chain is ADP-ribosylation factor-like protein 3 (ARL3) from Sus scrofa (Pig).